Reading from the N-terminus, the 248-residue chain is Coenzyme F420:L-glutamate ligase (248 aa).

GTP-binding positions include 15 to 18 (IPLI), 45 to 46 (ET), and Lys-50. Asp-115 is a binding site for a divalent metal cation. Asn-118 contributes to the GTP binding site. Residues Asp-155, Ser-156, and Gln-213 each coordinate a divalent metal cation. 211–218 (MGQSNEGI) lines the GTP pocket.

Belongs to the CofE family. In terms of assembly, homodimer. It depends on Mg(2+) as a cofactor. Requires Mn(2+) as cofactor. K(+) is required as a cofactor.

The catalysed reaction is oxidized coenzyme F420-0 + GTP + L-glutamate = oxidized coenzyme F420-1 + GDP + phosphate + H(+). It catalyses the reaction oxidized coenzyme F420-1 + GTP + L-glutamate = oxidized coenzyme F420-2 + GDP + phosphate + H(+). Its pathway is cofactor biosynthesis; coenzyme F420 biosynthesis. Functionally, catalyzes the GTP-dependent successive addition of two or more gamma-linked L-glutamates to the L-lactyl phosphodiester of 7,8-didemethyl-8-hydroxy-5-deazariboflavin (F420-0) to form coenzyme F420-0-glutamyl-glutamate (F420-2) or polyglutamated F420 derivatives. This is Coenzyme F420:L-glutamate ligase from Methanococcus maripaludis (strain DSM 14266 / JCM 13030 / NBRC 101832 / S2 / LL).